Here is a 463-residue protein sequence, read N- to C-terminus: Chaperone SurA (463 aa).

The first 25 residues, 1-25 (MTKPFSVVLASLLAITSTVSPLASA), serve as a signal peptide directing secretion. 2 PpiC domains span residues 174–276 (GSQY…KLVE) and 289–388 (VTEY…QRVG). 2 disordered regions span residues 328 to 348 (QATAKESSEDTNSRGQGGDLG) and 432 to 463 (RTGDRADDNATAAPAKSADPAAPSPPPAKPTR). The segment covering 440–452 (NATAAPAKSADPA) has biased composition (low complexity). Positions 453–463 (APSPPPAKPTR) are enriched in pro residues.

Its subcellular location is the periplasm. It catalyses the reaction [protein]-peptidylproline (omega=180) = [protein]-peptidylproline (omega=0). In terms of biological role, chaperone involved in the correct folding and assembly of outer membrane proteins. Recognizes specific patterns of aromatic residues and the orientation of their side chains, which are found more frequently in integral outer membrane proteins. May act in both early periplasmic and late outer membrane-associated steps of protein maturation. In Xanthomonas euvesicatoria pv. vesicatoria (strain 85-10) (Xanthomonas campestris pv. vesicatoria), this protein is Chaperone SurA.